Reading from the N-terminus, the 318-residue chain is tRNA pseudouridine synthase B (318 aa).

Catalysis depends on D47, which acts as the Nucleophile.

The protein belongs to the pseudouridine synthase TruB family. Type 1 subfamily.

The catalysed reaction is uridine(55) in tRNA = pseudouridine(55) in tRNA. Responsible for synthesis of pseudouridine from uracil-55 in the psi GC loop of transfer RNAs. In Colwellia psychrerythraea (strain 34H / ATCC BAA-681) (Vibrio psychroerythus), this protein is tRNA pseudouridine synthase B.